We begin with the raw amino-acid sequence, 488 residues long: Peptidoglycan endopeptidase LytF (488 aa).

An N-terminal signal peptide occupies residues 1 to 26 (MKKKLAAGLTASAIVGTTLVVTPAEA). LysM domains follow at residues 27 to 70 (ATIK…TLTI) and 92 to 135 (SVYT…KLKV). Disordered stretches follow at residues 70–93 (IPGSKSSTSSSTSSSTTKKSGSSV), 137–176 (GTVSSSSSSSKKSNSNKSSSSSSKSSSNKSSSSSSSTGTY), and 218–239 (KSSGSDTSSKDNSSKSNQTSAT). 2 stretches are compositionally biased toward low complexity: residues 72–93 (GSKSSTSSSTSSSTTKKSGSSV) and 140–172 (SSSSSSSKKSNSNKSSSSSSKSSSNKSSSSSSS). The region spanning 174-217 (GTYKVQLGDSLWKIANKVNMSIAELKVLNNLKSDTIYVNQVLKT) is the LysM 3 domain. The LysM 4 domain occupies 240-283 (TKYTVKSGDSLWKIANNYNLTVQQIRNINNLKSDVLYVGQVLKL). Residues 286-306 (KASSGSSSSSSSSSNASSGTT) form a disordered region. The region spanning 307 to 350 (TTYTVKSGDSLWVIAQKFNVTAQQIREKNNLKTDVLQVGQKLVI) is the LysM 5 domain. The region spanning 370 to 488 (SAKINTMISA…QRYLGAKRYF (119 aa)) is the NlpC/P60 domain. The active-site Nucleophile is the cysteine 400. The Proton acceptor role is filled by histidine 449. Asparagine 461 is an active-site residue.

It belongs to the peptidase C40 family.

It localises to the secreted. Its subcellular location is the cell wall. Is inhibited in vitro by para-hydroxymercuribenzoate, a sulfydryl inhibitor. Cell wall hydrolase that cleaves gamma-D-glutamate-meso-diaminopimelate bonds in peptidoglycan. LytF is necessary and sufficient for vegetative daughter cell separation, and also seems to play a role in cell autolysis. The sequence is that of Peptidoglycan endopeptidase LytF (lytF) from Bacillus subtilis (strain 168).